The following is a 93-amino-acid chain: uncharacterized protein (93 aa).

A signal peptide spans methionine 1–serine 22.

This is an uncharacterized protein from Escherichia coli (strain K12).